A 267-amino-acid polypeptide reads, in one-letter code: 3-methyl-2-oxobutanoate hydroxymethyltransferase (267 aa).

Mg(2+)-binding residues include aspartate 46 and aspartate 85. 3-methyl-2-oxobutanoate-binding positions include 46-47 (DS), aspartate 85, and lysine 115. Glutamate 117 contributes to the Mg(2+) binding site. Catalysis depends on glutamate 184, which acts as the Proton acceptor.

It belongs to the PanB family. Homodecamer; pentamer of dimers. Requires Mg(2+) as cofactor.

The protein resides in the cytoplasm. The enzyme catalyses 3-methyl-2-oxobutanoate + (6R)-5,10-methylene-5,6,7,8-tetrahydrofolate + H2O = 2-dehydropantoate + (6S)-5,6,7,8-tetrahydrofolate. Its pathway is cofactor biosynthesis; (R)-pantothenate biosynthesis; (R)-pantoate from 3-methyl-2-oxobutanoate: step 1/2. Functionally, catalyzes the reversible reaction in which hydroxymethyl group from 5,10-methylenetetrahydrofolate is transferred onto alpha-ketoisovalerate to form ketopantoate. The protein is 3-methyl-2-oxobutanoate hydroxymethyltransferase of Geotalea daltonii (strain DSM 22248 / JCM 15807 / FRC-32) (Geobacter daltonii).